The chain runs to 513 residues: L-arabinose transport ATP-binding protein AraG (513 aa).

ABC transporter domains are found at residues 6-243 and 264-508; these read LEMR…GMVG and VKNW…TKTA. 38–45 contributes to the ATP binding site; it reads GENGAGKS.

It belongs to the ABC transporter superfamily.

It is found in the cell membrane. It catalyses the reaction L-arabinose(out) + ATP + H2O = L-arabinose(in) + ADP + phosphate + H(+). Its function is as follows. Part of the binding-protein-dependent transport system for L-arabinose. Probably responsible for energy coupling to the transport system. This chain is L-arabinose transport ATP-binding protein AraG (araG), found in Geobacillus stearothermophilus (Bacillus stearothermophilus).